Reading from the N-terminus, the 185-residue chain is MEDNNLVSFDQGWFVIQTYAGYERKVKEDLLERAELYNMADKILRVEIPTETIRTEVNGKMKEVEENLFPGYVLVEMNMTDEAWFIVRNTPNVTGFVGSHGNRSKPTPLFEQEIQDILVGMGKVVREIDFDVFVGKRVRIVDGAFSGFEAPITEINGDKLTLTVDMFGRATPVELDMHQIEDIQA.

One can recognise a KOW domain in the interval 134-164; that stretch reads VGKRVRIVDGAFSGFEAPITEINGDKLTLTV.

Belongs to the NusG family.

Its function is as follows. Participates in transcription elongation, termination and antitermination. The chain is Transcription termination/antitermination protein NusG from Lactococcus lactis subsp. lactis (strain IL1403) (Streptococcus lactis).